A 422-amino-acid polypeptide reads, in one-letter code: Transcription termination factor Rho (422 aa).

The Rho RNA-BD domain maps to 52-127 (EVGGDGVLEV…TRVTKINFDD (76 aa)). Residues 173 to 178 (GKGQRG), 185 to 190 (RTGKTV), and arginine 216 each bind ATP.

It belongs to the Rho family. In terms of assembly, homohexamer. The homohexamer assembles into an open ring structure.

Facilitates transcription termination by a mechanism that involves Rho binding to the nascent RNA, activation of Rho's RNA-dependent ATPase activity, and release of the mRNA from the DNA template. In Cereibacter sphaeroides (strain ATCC 17023 / DSM 158 / JCM 6121 / CCUG 31486 / LMG 2827 / NBRC 12203 / NCIMB 8253 / ATH 2.4.1.) (Rhodobacter sphaeroides), this protein is Transcription termination factor Rho.